We begin with the raw amino-acid sequence, 204 residues long: High frequency lysogenization protein HflD homolog (204 aa).

Belongs to the HflD family.

It is found in the cytoplasm. The protein resides in the cell inner membrane. This chain is High frequency lysogenization protein HflD homolog, found in Shewanella sediminis (strain HAW-EB3).